Consider the following 181-residue polypeptide: Ninjurin-B (181 aa).

Basic and acidic residues predominate over residues 1–10; it reads MDSGEVKISL. Residues 1–72 are disordered; sequence MDSGEVKISL…SNKKCSSDLS (72 aa). Over 1–115 the chain is Extracellular; it reads MDSGEVKISL…YNDKASTYIY (115 aa). Over residues 12–26 the composition is skewed to polar residues; sequence DSPSSGESFASTTSG. Residues 33–49 show a composition bias toward basic and acidic residues; sequence RDLDIQVHESHIKDDQF. The interval 80-91 is helix alpha1; sequence NKNVAEGLMDIA. Residues 94–110 form a helix alpha2 region; that stretch reads SANANQLRFLITYNDKA. A helical transmembrane segment spans residues 116–136; it reads SMIMVILSLVLQLLVGIMLIF. Topologically, residues 137-153 are cytoplasmic; sequence KRRLKRFRNRSYERTND. Residues 154–174 traverse the membrane as a helical segment; sequence LLVMGVFMITVINILLAAFTT. Residues 175–181 lie on the Extracellular side of the membrane; that stretch reads TDGGGSH.

Belongs to the ninjurin family.

Its subcellular location is the membrane. Effector of non-apoptotic necrotic cell death that mediates plasma membrane rupture (cytolysis): oligomerizes in response to death stimuli and promotes plasma membrane rupture by introducing hydrophilic faces of 2 alpha helices into the hydrophobic membrane, leading to release intracellular molecules that propagate the inflammatory response. Also acts as a homophilic transmembrane adhesion molecule that promotes cell adhesion by mediating homophilic interactions via its extracellular region. In Drosophila melanogaster (Fruit fly), this protein is Ninjurin-B.